The chain runs to 167 residues: Small ribosomal subunit protein uS5 (167 aa).

The S5 DRBM domain occupies 11-74 (LQEKLIAVNR…EKARRNMINV (64 aa)).

It belongs to the universal ribosomal protein uS5 family. Part of the 30S ribosomal subunit. Contacts proteins S4 and S8.

Functionally, with S4 and S12 plays an important role in translational accuracy. Located at the back of the 30S subunit body where it stabilizes the conformation of the head with respect to the body. This is Small ribosomal subunit protein uS5 from Klebsiella pneumoniae subsp. pneumoniae (strain ATCC 700721 / MGH 78578).